Here is a 696-residue protein sequence, read N- to C-terminus: DNA-directed RNA polymerase subunit beta' (696 aa).

Cys-70, Cys-72, Cys-85, and Cys-88 together coordinate Zn(2+). Residues Asp-540, Asp-542, and Asp-544 each contribute to the Mg(2+) site.

It belongs to the RNA polymerase beta' chain family. RpoC1 subfamily. As to quaternary structure, in plastids the minimal PEP RNA polymerase catalytic core is composed of four subunits: alpha, beta, beta', and beta''. When a (nuclear-encoded) sigma factor is associated with the core the holoenzyme is formed, which can initiate transcription. Mg(2+) serves as cofactor. Requires Zn(2+) as cofactor.

The protein resides in the plastid. The protein localises to the chloroplast. The enzyme catalyses RNA(n) + a ribonucleoside 5'-triphosphate = RNA(n+1) + diphosphate. Its function is as follows. DNA-dependent RNA polymerase catalyzes the transcription of DNA into RNA using the four ribonucleoside triphosphates as substrates. This Phaeodactylum tricornutum (strain CCAP 1055/1) protein is DNA-directed RNA polymerase subunit beta'.